The following is a 360-amino-acid chain: Blue-light-activated histidine kinase 1 (360 aa).

The PAS domain occupies L38–R109. C85 carries the S-4a-FMN cysteine modification. The region spanning R109–T163 is the PAC domain. H173 is subject to Phosphohistidine; by autocatalysis. Residues R260–V303 are HWE histidine kinase domain.

FMN binds covalently to cysteine after exposure to blue light and this bond is spontaneously broken in the dark.

The enzyme catalyses ATP + protein L-histidine = ADP + protein N-phospho-L-histidine.. Photosensitive kinase that is involved in increased bacterial virulence upon exposure to light. This chain is Blue-light-activated histidine kinase 1, found in Erythrobacter litoralis (strain HTCC2594).